The sequence spans 272 residues: Ribosomal RNA small subunit methyltransferase A (272 aa).

S-adenosyl-L-methionine-binding residues include asparagine 18, leucine 20, glycine 45, glutamate 66, aspartate 91, and asparagine 113.

The protein belongs to the class I-like SAM-binding methyltransferase superfamily. rRNA adenine N(6)-methyltransferase family. RsmA subfamily.

Its subcellular location is the cytoplasm. The catalysed reaction is adenosine(1518)/adenosine(1519) in 16S rRNA + 4 S-adenosyl-L-methionine = N(6)-dimethyladenosine(1518)/N(6)-dimethyladenosine(1519) in 16S rRNA + 4 S-adenosyl-L-homocysteine + 4 H(+). Functionally, specifically dimethylates two adjacent adenosines (A1518 and A1519) in the loop of a conserved hairpin near the 3'-end of 16S rRNA in the 30S particle. May play a critical role in biogenesis of 30S subunits. The polypeptide is Ribosomal RNA small subunit methyltransferase A (Yersinia pseudotuberculosis serotype O:1b (strain IP 31758)).